Reading from the N-terminus, the 95-residue chain is Large ribosomal subunit protein uL23c (95 aa).

The protein belongs to the universal ribosomal protein uL23 family. In terms of assembly, part of the 50S ribosomal subunit.

The protein localises to the plastid. Its subcellular location is the chloroplast. Functionally, binds to 23S rRNA. The chain is Large ribosomal subunit protein uL23c (rpl23) from Guillardia theta (Cryptophyte).